The sequence spans 450 residues: MDLKNKTVMVVGTGISGIGAVDLLNKVGADCILYDGNEKLDRQKVQEKLGDNKAEIIIGAFDEALLSKIDLLVISPGVPIDSPIVLTFKNAGIPVWGEIELAYNYDKGKIIAITGTNGKTTTTALVGQIIAAYNEKTFVVGNIGNSYTGEVLKTSEDSYTVAEISSFQLETVHEFHPIVSAILNITPDHLNRHHTMECYAWTKERISENQTKADTCVLNLEDKYLTDFAPECKANVVWFSSERKPSVGAYVDGEMIKYTDGTNDYDMLNVHDMNLLGKHNYENVCAAIAMTKAAGIPDDIIIEQVKKFKAVEHRIEYVATKNGVDYYNDSKGTNPEAAVKAIEAMVKPTILIGGGYDKGSEFDLYVKAFKDKVKLLVLIGQTSAKIADTCKKYGFENIEYADSMEQVVDICAKNAVSGDAVLLSPACASWGMFDNYEQRGRIFKDLVNNL.

115-121 (GTNGKTT) contributes to the ATP binding site.

Belongs to the MurCDEF family.

The protein localises to the cytoplasm. The enzyme catalyses UDP-N-acetyl-alpha-D-muramoyl-L-alanine + D-glutamate + ATP = UDP-N-acetyl-alpha-D-muramoyl-L-alanyl-D-glutamate + ADP + phosphate + H(+). The protein operates within cell wall biogenesis; peptidoglycan biosynthesis. Its function is as follows. Cell wall formation. Catalyzes the addition of glutamate to the nucleotide precursor UDP-N-acetylmuramoyl-L-alanine (UMA). This is UDP-N-acetylmuramoylalanine--D-glutamate ligase from Lachnospira eligens (strain ATCC 27750 / DSM 3376 / VPI C15-48 / C15-B4) (Eubacterium eligens).